The primary structure comprises 390 residues: uncharacterized protein (390 aa).

11 helical membrane passes run 7 to 27 (IYIL…ISGI), 35 to 55 (LGIT…VYAL), 77 to 97 (LGLF…GWFI), 101 to 121 (IIMA…AAKI), 128 to 148 (GSAI…GVPL), 161 to 181 (VFGA…FTLP), 203 to 223 (VAMG…AYTY), 238 to 258 (LLSG…KFGG), 281 to 301 (LILL…LILW), 335 to 355 (MQFA…NVSL), and 357 to 377 (SITW…LLIF).

This sequence belongs to the major facilitator superfamily.

The protein localises to the cell membrane. This is an uncharacterized protein from Bacillus subtilis (strain 168).